Consider the following 178-residue polypeptide: Caveolin-1 (178 aa).

Serine 2 bears the N-acetylserine mark. Serine 2 bears the Phosphoserine mark. The segment at 2-94 (SGGKYVDAEG…WKASFTTFTV (93 aa)) is required for homooligomerization. Residues 2–104 (SGGKYVDAEG…TKYWFYRLLS (103 aa)) are Cytoplasmic-facing. Lysine 5 is subject to N6-acetyllysine; alternate. Residue lysine 5 forms a Glycyl lysine isopeptide (Lys-Gly) (interchain with G-Cter in ubiquitin); alternate linkage. Residue tyrosine 6 is modified to Phosphotyrosine. The residue at position 14 (tyrosine 14) is a Phosphotyrosine; by ABL1. The residue at position 25 (tyrosine 25) is a Phosphotyrosine. Glycyl lysine isopeptide (Lys-Gly) (interchain with G-Cter in ubiquitin) cross-links involve residues lysine 26, lysine 30, lysine 39, lysine 47, and lysine 57. The interval 82–94 (DGIWKASFTTFTV) is interaction with CAVIN3. The helical intramembrane region spans 105–125 (ALLGIPLALLWGIYFAILSFL). The Cytoplasmic segment spans residues 126-178 (HIWAVVPCIRSYLIEIQCISRVYSICIHTFCDPLFEAIGKVFSNIRATVQKEI). The tract at residues 131–142 (VPCIRSYLIEIQ) is interacts with SPRY1, SPRY2, SPRY3 and SPRY4. S-palmitoyl cysteine attachment occurs at residues cysteine 133, cysteine 143, and cysteine 156. The tract at residues 149–160 (SICIHTFCDPLF) is interacts with SPRY1, SPRY2, and SPRY4. Positions 167 to 178 (FSNIRATVQKEI) are interacts with SPRY1, SPRY2, SPRY3 and SPRY4.

Belongs to the caveolin family. Homooligomer. Interacts with GLIPR2. Interacts with NOSTRIN. Interacts with SNAP25 and STX1A. Interacts (via the N-terminus) with DPP4; the interaction is direct. Interacts with CTNNB1, CDH1 and JUP. Interacts with PACSIN2; this interaction induces membrane tubulation. Interacts with SLC7A9. Interacts with BMX and BTK. Interacts with TGFBR1. Interacts with CAVIN3 (via leucine-zipper domain) in a cholesterol-sensitive manner. Interacts with CAVIN1. Interacts with EHD2 in a cholesterol-dependent manner. Forms a ternary complex with UBXN6 and VCP; mediates CAV1 targeting to lysosomes for degradation. Interacts with ABCG1; this interaction regulates ABCG1-mediated cholesterol efflux. Interacts with NEU3; this interaction enhances NEU3 sialidase activity within caveola. Interacts (via C-terminus) with SPRY1, SPRY2 (via C-terminus), SPRY3, and SPRY4. Interacts with IGFBP5; this interaction allows trafficking of IGFBP5 from the plasma membrane to the nucleus. Phosphorylated at Tyr-14 by ABL1 in response to oxidative stress. Post-translationally, ubiquitinated. Undergo monoubiquitination and multi- and/or polyubiquitination. Monoubiquitination of N-terminal lysines promotes integration in a ternary complex with UBXN6 and VCP which promotes oligomeric CAV1 targeting to lysosomes for degradation. Ubiquitinated by ZNRF1; leading to degradation and modulation of the TLR4-mediated immune response.

The protein localises to the golgi apparatus membrane. It is found in the cell membrane. Its subcellular location is the membrane. The protein resides in the caveola. It localises to the membrane raft. Functionally, may act as a scaffolding protein within caveolar membranes. Forms a stable heterooligomeric complex with CAV2 that targets to lipid rafts and drives caveolae formation. Mediates the recruitment of CAVIN proteins (CAVIN1/2/3/4) to the caveolae. Interacts directly with G-protein alpha subunits and can functionally regulate their activity. Involved in the costimulatory signal essential for T-cell receptor (TCR)-mediated T-cell activation. Its binding to DPP4 induces T-cell proliferation and NF-kappa-B activation in a T-cell receptor/CD3-dependent manner. Recruits CTNNB1 to caveolar membranes and may regulate CTNNB1-mediated signaling through the Wnt pathway. Negatively regulates TGFB1-mediated activation of SMAD2/3 by mediating the internalization of TGFBR1 from membrane rafts leading to its subsequent degradation. Binds 20(S)-hydroxycholesterol (20(S)-OHC). The chain is Caveolin-1 (CAV1) from Ornithorhynchus anatinus (Duckbill platypus).